Reading from the N-terminus, the 448-residue chain is Antizyme inhibitor 1 (448 aa).

Belongs to the Orn/Lys/Arg decarboxylase class-II family. ODC antizyme inhibitor subfamily. In terms of assembly, monomer. Interacts with OAZ1 and OAZ3; this interaction disrupts the interaction between the antizyme and ODC1. In terms of processing, ubiquitinated, leading to its proteasomal degradation; a process that is reduced in presence of antizyme OAZ1. As to expression, expressed during testis development.

It is found in the nucleus. In terms of biological role, antizyme inhibitor (AZI) protein that positively regulates ornithine decarboxylase (ODC) activity and polyamine uptake. AZI is an enzymatically inactive ODC homolog that counteracts the negative effect of ODC antizymes (AZs) OAZ1, OAZ2 and OAZ3 on ODC activity by competing with ODC for antizyme-binding. Inhibits antizyme-dependent ODC degradation and releases ODC monomers from their inactive complex with antizymes, leading to formation of the catalytically active ODC homodimer and restoring polyamine production. The protein is Antizyme inhibitor 1 (Azin1) of Mus musculus (Mouse).